The primary structure comprises 452 residues: Na(+)/H(+) antiporter NhaA (452 aa).

Transmembrane regions (helical) follow at residues M23–I43, L71–I91, L108–V128, G136–G156, V165–F185, H189–G209, L216–H236, I316–G336, V349–V369, L385–L405, and E418–L438.

It belongs to the NhaA Na(+)/H(+) (TC 2.A.33) antiporter family.

The protein localises to the cell inner membrane. It carries out the reaction Na(+)(in) + 2 H(+)(out) = Na(+)(out) + 2 H(+)(in). Na(+)/H(+) antiporter that extrudes sodium in exchange for external protons. The protein is Na(+)/H(+) antiporter NhaA of Porphyromonas gingivalis (strain ATCC 33277 / DSM 20709 / CIP 103683 / JCM 12257 / NCTC 11834 / 2561).